The following is a 421-amino-acid chain: 4'-demethylrebeccamycin synthase (421 aa).

This sequence belongs to the glycosyltransferase 28 family.

The catalysed reaction is 4'-demethylrebeccamycin + H2O = dichloroarcyriaflavin A + beta-D-glucose. It functions in the pathway alkaloid biosynthesis. In terms of biological role, catalyzes the penultimate step in the biosynthesis of rebeccamycin, an indolocarbazole alkaloid that inhibits topoisomerase 1. Has a wide substrate range, including staurosporine aglycone, EJG-III-108A, J-104303, 6-N-methyl-arcyriaflavin and indolo-[2,3-a]-carbazole. This is 4'-demethylrebeccamycin synthase (rebG) from Lentzea aerocolonigenes (Lechevalieria aerocolonigenes).